The chain runs to 359 residues: Guanine nucleotide-binding protein-like alpha-11 subunit (359 aa).

The N-myristoyl glycine moiety is linked to residue Gly2. In terms of domain architecture, G-alpha spans 29 to 359; that stretch reads KLIKILMMGN…YVKKILEDTI (331 aa). Positions 32 to 45 are G1 motif; the sequence is KILMMGNENSAKST. Ser44 is a Mg(2+) binding site. Residues 176–185 are G2 motif; the sequence is DIIRCSKNNQ. GTP contacts are provided by residues 178 to 185, 204 to 208, and 281 to 284; these read IRCSKNNQ, DTGNQ, and NKKE. Residues 200 to 209 are G3 motif; sequence FVFVDTGNQK. A G4 motif region spans residues 277-284; sequence IVLFNKKE. Residues 337–342 form a G5 motif region; sequence FNSSDT.

It belongs to the G-alpha family.

This chain is Guanine nucleotide-binding protein-like alpha-11 subunit (gpaK), found in Dictyostelium discoideum (Social amoeba).